The chain runs to 166 residues: Large ribosomal subunit protein uL10 (166 aa).

The protein belongs to the universal ribosomal protein uL10 family. As to quaternary structure, part of the ribosomal stalk of the 50S ribosomal subunit. The N-terminus interacts with L11 and the large rRNA to form the base of the stalk. The C-terminus forms an elongated spine to which L12 dimers bind in a sequential fashion forming a multimeric L10(L12)X complex.

Its function is as follows. Forms part of the ribosomal stalk, playing a central role in the interaction of the ribosome with GTP-bound translation factors. The protein is Large ribosomal subunit protein uL10 of Bacillus cereus (strain ATCC 14579 / DSM 31 / CCUG 7414 / JCM 2152 / NBRC 15305 / NCIMB 9373 / NCTC 2599 / NRRL B-3711).